The primary structure comprises 367 residues: Pectate lyase 1 (367 aa).

The first 21 residues, 1-21 (MASPCLIAFLVFLCAIVSCCS), serve as a signal peptide directing secretion. 2 cysteine pairs are disulfide-bonded: C28–C45 and C128–C147. N-linked (GlcNAc...) asparagine glycosylation is present at N148. D170 provides a ligand contact to Ca(2+). N178 carries an N-linked (GlcNAc...) asparagine glycan. D194 and D198 together coordinate Ca(2+). Residue R250 is part of the active site. C306 and C312 are joined by a disulfide.

Belongs to the polysaccharide lyase 1 family. Amb a subfamily. Requires Ca(2+) as cofactor.

It carries out the reaction Eliminative cleavage of (1-&gt;4)-alpha-D-galacturonan to give oligosaccharides with 4-deoxy-alpha-D-galact-4-enuronosyl groups at their non-reducing ends.. Its pathway is glycan metabolism; pectin degradation; 2-dehydro-3-deoxy-D-gluconate from pectin: step 2/5. In terms of biological role, has pectate lyase activity. In Juniperus virginiana (Eastern redcedar), this protein is Pectate lyase 1.